The following is a 93-amino-acid chain: MISIDLTLKYSPMPVSVQRKEKDGAEALYQTIVTAMQGDRPQVLELTCEKQTEKKVAIMSDQISAVIVSEKDGAASAGKVPGFAALGQIVNQG.

This sequence belongs to the UPF0367 family.

The sequence is that of UPF0367 protein ssl1972 from Synechocystis sp. (strain ATCC 27184 / PCC 6803 / Kazusa).